Reading from the N-terminus, the 175-residue chain is Movement protein (175 aa).

Positions 30 to 47 (ADLDDDEEVTTGQEELFL) are homodimerization. Positions 50-156 (EQVRARHLFS…QRLTSTERNG (107 aa)) are RNA-binding. Phosphoserine occurs at positions 64 and 133. Composition is skewed to polar residues over residues 116–141 (SLTS…SQSP) and 148–169 (RLTS…SSTK). Residues 116-175 (SLTSWTHTVNSTPFPQLSTSSGSQSPGKGRLQRLTSTERNGTTLPRTNSGSSTKAMVLHR) are disordered.

Belongs to the polerovirus movement protein family. Homodimer. In terms of processing, phosphorylated.

The protein localises to the host cell junction. It is found in the host plasmodesma. It localises to the host Golgi apparatus. Its function is as follows. Together with movement protein P3a, facilitates long-distance movement of virions in host. Transports viral genome to neighboring plant cells directly through plasmosdesmata, without any budding. The movement protein allows efficient cell to cell propagation, by bypassing the host cell wall barrier. Binds ssRNA. The protein is Movement protein of Turnip yellows virus (isolate FL-1) (TuYV).